The chain runs to 204 residues: ATP-dependent Clp protease proteolytic subunit 1 (204 aa).

The active-site Nucleophile is the S97. Residue H122 is part of the active site.

This sequence belongs to the peptidase S14 family. As to quaternary structure, fourteen ClpP subunits assemble into 2 heptameric rings which stack back to back to give a disk-like structure with a central cavity, resembling the structure of eukaryotic proteasomes.

The protein resides in the cytoplasm. The catalysed reaction is Hydrolysis of proteins to small peptides in the presence of ATP and magnesium. alpha-casein is the usual test substrate. In the absence of ATP, only oligopeptides shorter than five residues are hydrolyzed (such as succinyl-Leu-Tyr-|-NHMec, and Leu-Tyr-Leu-|-Tyr-Trp, in which cleavage of the -Tyr-|-Leu- and -Tyr-|-Trp bonds also occurs).. Functionally, cleaves peptides in various proteins in a process that requires ATP hydrolysis. Has a chymotrypsin-like activity. Plays a major role in the degradation of misfolded proteins. The sequence is that of ATP-dependent Clp protease proteolytic subunit 1 from Trichormus variabilis (strain ATCC 29413 / PCC 7937) (Anabaena variabilis).